The following is a 669-amino-acid chain: Dynamin-related protein 4C (669 aa).

The interval 1–21 (MVKKKVATKKNSPSLAIAKKK) is disordered. The Dynamin-type G domain occupies 62 to 323 (GIHLPTIVVV…QSSMIARCLP (262 aa)). Residues 72–79 (GDQSSGKS) are G1 motif. 72–79 (GDQSSGKS) serves as a coordination point for GTP. The tract at residues 97-99 (CTR) is G2 motif. The tract at residues 171 to 174 (DLPG) is G3 motif. Residues 171-175 (DLPGI) and 240-243 (TKAD) each bind GTP. A G4 motif region spans residues 240–243 (TKAD). A region of interest (G5 motif) is located at residue Glu-273. One can recognise a GED domain in the interval 575 to 669 (AFDMKMRITS…AVAAIVDQNC (95 aa)).

Belongs to the TRAFAC class dynamin-like GTPase superfamily. Dynamin/Fzo/YdjA family.

Its subcellular location is the cytoplasm. The protein resides in the cytoskeleton. Its function is as follows. Putative microtubule-associated force-producing protein, able to bind and hydrolyze GTP. This chain is Dynamin-related protein 4C (DRP4C), found in Arabidopsis thaliana (Mouse-ear cress).